The chain runs to 400 residues: Methylthioribose kinase (400 aa).

ATP-binding positions include Asn-40, Lys-57, and 111-113 (EDL). Residue Asp-229 participates in substrate binding. 246–248 (DAE) contributes to the ATP binding site. Arg-344 is a binding site for substrate.

It belongs to the methylthioribose kinase family. As to quaternary structure, homodimer.

The catalysed reaction is 5-(methylsulfanyl)-D-ribose + ATP = 5-(methylsulfanyl)-alpha-D-ribose 1-phosphate + ADP + H(+). It functions in the pathway amino-acid biosynthesis; L-methionine biosynthesis via salvage pathway; S-methyl-5-thio-alpha-D-ribose 1-phosphate from S-methyl-5'-thioadenosine (hydrolase route): step 2/2. Catalyzes the phosphorylation of methylthioribose into methylthioribose-1-phosphate. The protein is Methylthioribose kinase of Pectobacterium carotovorum subsp. carotovorum (strain PC1).